Here is a 338-residue protein sequence, read N- to C-terminus: Biotin synthase (338 aa).

One can recognise a Radical SAM core domain in the interval 63-290 (NGVQLSTLLS…RAKVRLSAGR (228 aa)). Cys78, Cys82, and Cys85 together coordinate [4Fe-4S] cluster. [2Fe-2S] cluster contacts are provided by Cys122, Cys153, Cys213, and Arg285.

This sequence belongs to the radical SAM superfamily. Biotin synthase family. In terms of assembly, homodimer. It depends on [4Fe-4S] cluster as a cofactor. Requires [2Fe-2S] cluster as cofactor.

The catalysed reaction is (4R,5S)-dethiobiotin + (sulfur carrier)-SH + 2 reduced [2Fe-2S]-[ferredoxin] + 2 S-adenosyl-L-methionine = (sulfur carrier)-H + biotin + 2 5'-deoxyadenosine + 2 L-methionine + 2 oxidized [2Fe-2S]-[ferredoxin]. It participates in cofactor biosynthesis; biotin biosynthesis; biotin from 7,8-diaminononanoate: step 2/2. Its function is as follows. Catalyzes the conversion of dethiobiotin (DTB) to biotin by the insertion of a sulfur atom into dethiobiotin via a radical-based mechanism. This is Biotin synthase from Nitrosomonas eutropha (strain DSM 101675 / C91 / Nm57).